Reading from the N-terminus, the 85-residue chain is Hepcidin (85 aa).

The first 24 residues, 1-24 (MKTFSVAVAVAVVLAFICLQESSA), serve as a signal peptide directing secretion. Residues 25–64 (VPANEEQELEQQIYFADPEMPVESCKMPYYMRENRQGSPA) constitute a propeptide that is removed on maturation. 4 disulfides stabilise this stretch: Cys66-Cys83, Cys69-Cys72, Cys70-Cys79, and Cys73-Cys82.

As to quaternary structure, monomer. Expressed in all tissues tested, with highest levels of expression in kidney and lowest levels in liver. Intra-peritoneal injection of lipopolysaccharide results in increased expression in heart, spleen and stomach, but not in kidney or liver.

The protein resides in the secreted. Seems to act as a signaling molecule involved in the maintenance of iron homeostasis. Seems to be required in conjunction with HFE to regulate both intestinal iron absorption and iron storage in macrophages. In terms of biological role, has very strong antibacterial activity against the marine Gram-negative bacteria V.alginolyticus (MIC=24 uM), V.fluvialis, V.harveyis (MIC=12 uM) and V.parahaemolyticus (MIC=6 uM). Has antibacterial activity against the Gram-negative bacteria A.hydrophila (MIC=6 uM), E.coli (MIC=24 uM), and E.coli BL21(DE3)plysS (MIC=6 uM), and the Gram-positive bacteria B.cereus (MIC=24 uM), B.subtilis (MIC=6 uM), C.glutamicum (MIC=3 uM), M.luteus (MIC=3 uM), M.lysodeikticus, S.aureus (MIC=6 uM) and S.epidermis (MIC=12 uM). Possesses antifungal activity against A.niger (MIC=24 uM), F.graminearum (MIC24 uM) and F.solani (MIC=24 uM), but lacks antifungal activity against the yeasts P.pastoris GS115 and C.albicans. This chain is Hepcidin, found in Larimichthys crocea (Large yellow croaker).